A 224-amino-acid polypeptide reads, in one-letter code: MIKKFFITGTDTNVGKTIVSSILLKKATMSGYQTAGYKPVSSGGQKKSSGFFNQDAILLKKSSSIILSDREVNPIAFFENAPPHILSKFQKRSIKKEELSLGLNNITKKSNWILVEGAGGWYTPLSCKDTFSSWVKQEKLTVIIIIAIKLGCINHAILTEKAIISDQIKCGGWIANNIFPKDKYNMHYIQTLLNYIKSPFLGVVPYFKNKNRINFKKIKIKLPK.

13–18 (NVGKTI) lines the ATP pocket. Threonine 17 contributes to the Mg(2+) binding site. Residue lysine 38 is part of the active site. Serine 42 provides a ligand contact to substrate. ATP contacts are provided by residues aspartate 55, 116-119 (EGAG), 176-177 (NN), and asparagine 211. Aspartate 55 and glutamate 116 together coordinate Mg(2+).

The protein belongs to the dethiobiotin synthetase family. In terms of assembly, homodimer. Mg(2+) is required as a cofactor.

It is found in the cytoplasm. The enzyme catalyses (7R,8S)-7,8-diammoniononanoate + CO2 + ATP = (4R,5S)-dethiobiotin + ADP + phosphate + 3 H(+). Its pathway is cofactor biosynthesis; biotin biosynthesis; biotin from 7,8-diaminononanoate: step 1/2. Catalyzes a mechanistically unusual reaction, the ATP-dependent insertion of CO2 between the N7 and N8 nitrogen atoms of 7,8-diaminopelargonic acid (DAPA, also called 7,8-diammoniononanoate) to form a ureido ring. In Buchnera aphidicola subsp. Acyrthosiphon pisum (strain APS) (Acyrthosiphon pisum symbiotic bacterium), this protein is ATP-dependent dethiobiotin synthetase BioD.